We begin with the raw amino-acid sequence, 240 residues long: Probable transcriptional regulator ycf27 (240 aa).

A Response regulatory domain is found at 5-118; the sequence is KILVIDDEAS…ELEARIRSVL (114 aa). Asp54 bears the 4-aspartylphosphate mark. The segment at residues 74-92 is a DNA-binding region (H-T-H motif); sequence DVPIIMLTALSDVSDRITG. The ompR/PhoB-type DNA-binding region spans 133-234; that stretch reads SGIINIGFLK…ARGTGYLFQR (102 aa).

Its subcellular location is the plastid. It localises to the chloroplast. Probable promoter-specific protein mediating the interaction between DNA and RNA polymerase. The protein is Probable transcriptional regulator ycf27 (ycf27) of Porphyridium aerugineum (Red microalga).